The following is a 199-amino-acid chain: MRSFVLRARAAPTESKLILEGVGQDAHTEILAHTLMNTIFVAQSHRENVTVHLVLESTKDFSRTITFDSNEITNIGGFHESALLSAVVRAVDASQGMIKEQTRQVEPGITVRTMSFEKLVKELAEDHQLYMMDKKGDFIRDAEIAENPCFLLTDHIPMPKKSYNSLKRLGTEKISLGPNMLFASQCVVLINNELDVRGF.

2 residues coordinate S-adenosyl-L-methionine: methionine 132 and cysteine 186.

It belongs to the methyltransferase superfamily. TrmY family.

The protein localises to the cytoplasm. This is Putative pseudouridine methyltransferase from Vibrio atlanticus (strain LGP32) (Vibrio splendidus (strain Mel32)).